The sequence spans 176 residues: DNA-directed RNA polymerase II subunit 7 (176 aa).

This sequence belongs to the eukaryotic RPB7/RPC8 RNA polymerase subunit family. As to quaternary structure, component of the RNA polymerase II complex consisting of at least 12 subunits. Interacts with NRPB4.

The protein resides in the nucleus. DNA-dependent RNA polymerase catalyzes the transcription of DNA into RNA using the four ribonucleoside triphosphates as substrates. Component of RNA polymerase II which synthesizes mRNA precursors and many functional non-coding RNAs. Pol II is the central component of the basal RNA polymerase II transcription machinery. It is composed of mobile elements that move relative to each other. NRPB7 is part of a subcomplex with NRPB4 that binds to a pocket formed by NRPB1, NRPB2 and NRPB6 at the base of the clamp element. The NRBP4-NRPB7 subcomplex seems to lock the clamp via NRPB7 in the closed conformation thus preventing double-stranded DNA to enter the active site cleft. The NRPB4-NRPB7 subcomplex binds single-stranded DNA and RNA. This Arabidopsis thaliana (Mouse-ear cress) protein is DNA-directed RNA polymerase II subunit 7 (NRPB7).